A 362-amino-acid polypeptide reads, in one-letter code: 3-dehydroquinate synthase (362 aa).

NAD(+) contacts are provided by residues 71 to 76, 105 to 109, 129 to 130, Lys-142, Lys-151, and 169 to 172; these read DGEQYK, GVIGD, TT, and CLKT. The Zn(2+) site is built by Glu-184, His-247, and His-264.

Belongs to the sugar phosphate cyclases superfamily. Dehydroquinate synthase family. The cofactor is NAD(+). Co(2+) serves as cofactor. It depends on Zn(2+) as a cofactor.

It localises to the cytoplasm. It catalyses the reaction 7-phospho-2-dehydro-3-deoxy-D-arabino-heptonate = 3-dehydroquinate + phosphate. Its pathway is metabolic intermediate biosynthesis; chorismate biosynthesis; chorismate from D-erythrose 4-phosphate and phosphoenolpyruvate: step 2/7. Its function is as follows. Catalyzes the conversion of 3-deoxy-D-arabino-heptulosonate 7-phosphate (DAHP) to dehydroquinate (DHQ). This is 3-dehydroquinate synthase from Salmonella typhi.